The chain runs to 355 residues: cAMP-dependent protein kinase catalytic subunit PRKX (355 aa).

Methionine 1 carries the N-acetylmethionine modification. The tract at residues methionine 1–serine 42 is disordered. A Protein kinase domain is found at tryptophan 46–phenylalanine 300. ATP-binding positions include valine 52–valine 60 and lysine 75. Aspartate 169 functions as the Proton acceptor in the catalytic mechanism. Position 200 is a phosphothreonine (threonine 200). The region spanning arginine 301–phenylalanine 355 is the AGC-kinase C-terminal domain. The segment at proline 316–phenylalanine 355 is disordered. A compositionally biased stretch (basic and acidic residues) spans glutamate 337–phenylalanine 355.

This sequence belongs to the protein kinase superfamily. AGC Ser/Thr protein kinase family. cAMP subfamily. In terms of assembly, like other cAMP-dependent protein kinases, the inactive holoenzyme is probably composed of 2 PRKX catalytic subunits and a dimer of regulatory subunits. Interacts (cAMP-dependent) specifically with the regulatory subunits PRKAR1A and PRKAR1B. Compared to other cAMP-dependent serine/threonine protein kinases, does not interact with the 2 other PKA regulatory subunits PRKAR2A and PRKAR2B. Interacts with PIN1 (via WW domain). Interacts with cAMP-dependent protein kinase inhibitor/PKI proteins; inhibits PRKX. Interacts with GPKOW. Interacts with SMAD6. Interacts with PKD1; involved in differentiation and controlled morphogenesis of the kidney. Post-translationally, phosphorylated; autophosphorylates in vitro. As to expression, widely expressed.

Its subcellular location is the cytoplasm. It is found in the nucleus. It catalyses the reaction L-seryl-[protein] + ATP = O-phospho-L-seryl-[protein] + ADP + H(+). The catalysed reaction is L-threonyl-[protein] + ATP = O-phospho-L-threonyl-[protein] + ADP + H(+). With respect to regulation, binding of cAMP to the PRKAR1A or PRKAR1B regulatory subunits induces dissociation of the holoenzyme heterotetramer. The released monomeric PRKX is then active and able to phosphorylate its substrates. Functionally, serine/threonine protein kinase regulated by and mediating cAMP signaling in cells. Acts through phosphorylation of downstream targets that may include CREB, SMAD6 and PKD1 and has multiple functions in cellular differentiation and epithelial morphogenesis. Regulates myeloid cell differentiation through SMAD6 phosphorylation. Involved in nephrogenesis by stimulating renal epithelial cell migration and tubulogenesis. Also involved in angiogenesis through stimulation of endothelial cell proliferation, migration and vascular-like structure formation. The chain is cAMP-dependent protein kinase catalytic subunit PRKX (Prkx) from Mus musculus (Mouse).